Here is a 254-residue protein sequence, read N- to C-terminus: MQSLNYEDQVLWTRWKEWKDPKAGDDLMRRYMPLVTYHVGRISVGLPKSVHKDDLMSLGMLGLYDALEKFDPSRDLKFDTYASFRIRGAIIDGLRKEDWLPRTSREKTKKVEAAIEKLEQRYLRNVSPAEIAEELGMTVQDVVSTMNEGFFANLLSIDEKLHDQDDGENIQVMIRDDKNVPPEEKIMKDELIAQLAEKIHELSEKEQLVVSLFYKEELTLTEIGQVLNLSTSRISQIHSKALFKLKNLLEKVIQ.

A Polymerase core binding motif is present at residues 54–67; sequence DLMSLGMLGLYDAL. Residues 220 to 239 constitute a DNA-binding region (H-T-H motif); that stretch reads LTEIGQVLNLSTSRISQIHS.

As to quaternary structure, monomer. Interacts transiently with the RNAP core.

In terms of biological role, sigma factors are initiation factors that promote the attachment of RNA polymerase (RNAP) to specific initiation sites and are then released. This alternative sigma factor is required for the transcription of the flagellin and motility genes as well as for wild-type chemotaxis. Associates with the RNAP core during all growth phases with a peak at the transition to stationary phase. This chain is RNA polymerase sigma-D factor (sigD), found in Bacillus subtilis (strain 168).